Consider the following 81-residue polypeptide: Protein I5 homolog (81 aa).

Transmembrane regions (helical) follow at residues 8–28 and 53–73; these read LITI…FSLV and MEIF…AAYI.

This sequence belongs to the Chordopoxvirinae I5 family.

The protein resides in the virion membrane. The polypeptide is Protein I5 homolog (Vertebrata (FPV)).